Reading from the N-terminus, the 68-residue chain is Large ribosomal subunit protein bL35 (68 aa).

Belongs to the bacterial ribosomal protein bL35 family.

The chain is Large ribosomal subunit protein bL35 from Rickettsia bellii (strain RML369-C).